A 261-amino-acid chain; its full sequence is MEMO1 family protein AF_2310 (261 aa).

It belongs to the MEMO1 family.

The polypeptide is MEMO1 family protein AF_2310 (Archaeoglobus fulgidus (strain ATCC 49558 / DSM 4304 / JCM 9628 / NBRC 100126 / VC-16)).